A 610-amino-acid polypeptide reads, in one-letter code: Alpha-fetoprotein (610 aa).

Residues 1–18 form the signal peptide; it reads MKWVVSIFLIVLLNFTES. Albumin domains follow at residues 19–210, 211–403, and 404–602; these read RTMH…ASIT, KELR…EELE, and KYIQ…ALIS. His-22 contacts Cu(2+). Cystine bridges form between Cys-99-Cys-114, Cys-113-Cys-124, Cys-148-Cys-193, Cys-192-Cys-201, Cys-224-Cys-270, Cys-269-Cys-277, Cys-289-Cys-303, and Cys-302-Cys-314. Phosphoserine occurs at positions 111, 115, and 117. Asn-251 is a glycosylation site (N-linked (GlcNAc...) asparagine). Ser-345 carries the post-translational modification Phosphoserine. 7 disulfides stabilise this stretch: Cys-385/Cys-394, Cys-417/Cys-463, Cys-462/Cys-473, Cys-486/Cys-502, Cys-501/Cys-512, Cys-539/Cys-584, and Cys-583/Cys-592.

This sequence belongs to the ALB/AFP/VDB family. In terms of assembly, dimeric and trimeric forms have been found in addition to the monomeric form. As to expression, plasma. Synthesized by the fetal liver and yolk sac.

It localises to the secreted. Binds copper, nickel, and fatty acids as well as, and bilirubin less well than, serum albumin. In Sus scrofa (Pig), this protein is Alpha-fetoprotein (AFP).